We begin with the raw amino-acid sequence, 681 residues long: Cell cycle checkpoint protein RAD17 (681 aa).

An RAD1-binding motif motif is present at residues 17–25 (DWVDPSFDD). Residues 42–63 (VNNSSHRRKNGPSTLESSRFPA) form a disordered region. The residue at position 55 (Thr55) is a Phosphothreonine. 2 positions are modified to phosphoserine: Ser71 and Ser86. Residue 137–144 (GPPGCGKT) participates in ATP binding. Position 359 is a phosphoserine (Ser359). The interval 432–681 (LVEPEEVVEM…IIEDYESDGT (250 aa)) is interaction with MCM7. Positions 606 to 681 (HGMIDPDSGD…IIEDYESDGT (76 aa)) are disordered. The span at 631 to 662 (EPTQATALETWSLPLSQNSASELPASQPQPFS) shows a compositional bias: polar residues. A Phosphothreonine modification is found at Thr633. Phosphoserine occurs at positions 646 and 656. Positions 666-681 (DMEENIIIEDYESDGT) are enriched in acidic residues.

It belongs to the rad17/RAD24 family. In terms of assembly, part of a DNA-binding complex containing RFC2, RFC3, RFC4 and RFC5. Interacts with RAD1 and RAD9 within the 9-1-1 (RAD1-RAD9-HUS1) complex. Interacts with RAD9B, POLE, SNU13 and MCM7. DNA damage promotes interaction with ATR or ATM and disrupts interaction with the 9-1-1 (RAD1-RAD9-HUS1) complex. Interacts (when phosphorylated) with NBN; promoting recruitment of the MRN complex to DNA damage sites. Post-translationally, phosphorylated. Phosphorylation on Ser-646 and Ser-656 is cell cycle-regulated, enhanced by genotoxic stress, and required for activation of checkpoint signaling. Phosphorylation is mediated by ATR upon UV or replication arrest, whereas it may be mediated both by ATR and ATM upon ionizing radiation. Phosphorylation on both sites is required for interaction with RAD1 but dispensable for interaction with RFC3 or RFC4. Phosphorylation at Thr-633 by ATM in response to DNA damage promotes interaction with NBN and recruitment of the MRN complex to DNA damage sites.

The protein resides in the nucleus. It localises to the chromosome. Its function is as follows. Essential for sustained cell growth, maintenance of chromosomal stability, and ATR-dependent checkpoint activation upon DNA damage. Has a weak ATPase activity required for binding to chromatin. Participates in the recruitment of the 9-1-1 (RAD1-RAD9-HUS1) complex and RHNO1 onto chromatin, and in CHEK1 activation. Involved in homologous recombination by mediating recruitment of the MRN complex to DNA damage sites. May also serve as a sensor of DNA replication progression. The sequence is that of Cell cycle checkpoint protein RAD17 (RAD17) from Pongo abelii (Sumatran orangutan).